The sequence spans 415 residues: Packaging protein 3 (415 aa).

The tract at residues 1–55 (MHPVLRQMRPPPQQRQEQEQRQTCRAPSPPPTASGGATSAVDAAADGDYEPPRRR) is disordered. The interaction with packaging protein 1 stretch occupies residues 1 to 173 (MHPVLRQMRP…VNQEINFQKS (173 aa)). Phosphoserine; by host occurs at positions 75 and 360. Positions 381–394 (GAGPGLAVAPARAG) are enriched in low complexity. The tract at residues 381–415 (GAGPGLAVAPARAGNVGGVEEYDEDDEYEPEDGEY) is disordered. Positions 400–415 (EEYDEDDEYEPEDGEY) are enriched in acidic residues.

The protein belongs to the adenoviridae packaging protein 3 family. Part of the genome packaging complex composed of packaging proteins 1, 2 and 3; this complex specifically binds to the packaging sequence on the left end of viral genomic DNA and performs packaging of the viral genome. Interacts with hexon-linking protein IIIa; this interaction is required to promote correct genome packaging. Cleaved at different sites by the viral protease during virion maturation.

The protein localises to the host nucleus. Involved in viral genome packaging through its interaction with packaging proteins 1 and 2. After proteolytic cleavage by adenovirus protease, L1 52/55k protein is removed from the capsid during viral maturation. This is Packaging protein 3 from Homo sapiens (Human).